A 23-amino-acid chain; its full sequence is Apolipophorin-3 (23 aa).

This sequence belongs to the insect apolipophorin-3 family. In terms of assembly, equilibrium between a soluble monomer and a bound lipoprotein form. Apolipophorin-3 associates with lipophorin during lipid loading until each particle contains 9 or 14 molecules of apolipophorin-3. In terms of tissue distribution, hemolymph.

It is found in the secreted. Its function is as follows. Assists in the loading of diacylglycerol, generated from triacylglycerol stores in the fat body through the action of adipokinetic hormone, into lipophorin, the hemolymph lipoprotein. It increases the lipid carrying capacity of lipophorin by covering the expanding hydrophobic surface resulting from diacylglycerol uptake. It thus plays a critical role in the transport of lipids during flight in several species of insects. In Melanoplus sanguinipes (Migratory grasshopper), this protein is Apolipophorin-3.